We begin with the raw amino-acid sequence, 332 residues long: Biotin synthase (332 aa).

The 229-residue stretch at 51–279 folds into the Radical SAM core domain; it reads YKVQLASLLS…RSRVRLSAGR (229 aa). Residues cysteine 66, cysteine 70, and cysteine 73 each coordinate [4Fe-4S] cluster. 4 residues coordinate [2Fe-2S] cluster: cysteine 110, cysteine 142, cysteine 202, and arginine 274.

Belongs to the radical SAM superfamily. Biotin synthase family. As to quaternary structure, homodimer. [4Fe-4S] cluster serves as cofactor. [2Fe-2S] cluster is required as a cofactor.

It carries out the reaction (4R,5S)-dethiobiotin + (sulfur carrier)-SH + 2 reduced [2Fe-2S]-[ferredoxin] + 2 S-adenosyl-L-methionine = (sulfur carrier)-H + biotin + 2 5'-deoxyadenosine + 2 L-methionine + 2 oxidized [2Fe-2S]-[ferredoxin]. Its pathway is cofactor biosynthesis; biotin biosynthesis; biotin from 7,8-diaminononanoate: step 2/2. Catalyzes the conversion of dethiobiotin (DTB) to biotin by the insertion of a sulfur atom into dethiobiotin via a radical-based mechanism. The chain is Biotin synthase from Prochlorococcus marinus (strain SARG / CCMP1375 / SS120).